Reading from the N-terminus, the 234-residue chain is Carbohydrate deacetylase (234 aa).

2 residues coordinate Mg(2+): histidine 60 and histidine 123.

This sequence belongs to the YdjC deacetylase family. Mg(2+) serves as cofactor.

Probably catalyzes the deacetylation of acetylated carbohydrates an important step in the degradation of oligosaccharides. This chain is Carbohydrate deacetylase, found in Bacillus anthracis.